The chain runs to 496 residues: Glutelin type-A 3 (496 aa).

A signal peptide spans 1–24 (MATIKFPIVFSVVCLFLLCNGSLA). 2 disulfides stabilise this stretch: Cys45–Cys78 and Cys121–Cys312. 2 Cupin type-1 domains span residues 50–248 (LQAF…GVAR) and 318–467 (QNID…EEAR).

Belongs to the 11S seed storage protein (globulins) family. In terms of assembly, hexamer; each subunit is composed of an acidic and a basic chain derived from a single precursor and linked by a disulfide bond.

Functionally, seed storage protein. In Oryza sativa subsp. japonica (Rice), this protein is Glutelin type-A 3 (GLUA3).